The sequence spans 437 residues: Branched-chain amino acid transport system 3 carrier protein (437 aa).

Helical transmembrane passes span 9 to 29 (ILAL…IIFP), 40 to 60 (VWLA…ITVI), 79 to 99 (YAGG…FAIP), 120 to 140 (ALFV…LYPG), 155 to 175 (ILAL…PIGT), 189 to 209 (FVNG…IVIV), 226 to 246 (YAIV…VSLF), 277 to 297 (LGSS…AVGL), 316 to 336 (LVII…TKLI), 342 to 362 (VLTA…CIGL), 369 to 389 (ILAP…LKAA), and 399 to 419 (LLHL…VATL).

The protein belongs to the branched chain amino acid transporter family.

The protein localises to the cell inner membrane. In terms of biological role, component of the LIV-III transport system for branched-chain amino acids. BraZ is specific for isoleucine and valine. The LIV-III transport system may be H(+)-coupled. The chain is Branched-chain amino acid transport system 3 carrier protein (braZ) from Pseudomonas aeruginosa (strain ATCC 15692 / DSM 22644 / CIP 104116 / JCM 14847 / LMG 12228 / 1C / PRS 101 / PAO1).